Reading from the N-terminus, the 729-residue chain is Sodium-dependent neutral amino acid transporter B(0)AT2 (729 aa).

Over 1-69 the chain is Cytoplasmic; it reads MPKNSKVVKR…ARPAWNSKLQ (69 aa). Phosphoserine occurs at positions 25 and 55. 3 helical membrane-spanning segments follow: residues 70 to 90, 98 to 117, and 142 to 162; these read YILAQVGFSVGLGNVWRFPYL, AYLLPYLILLLVIGIPLFFL, and GIGFASCVVCFFVALYYNVII. The Extracellular portion of the chain corresponds to 163 to 225; it reads GWSLFYFSQS…TSISESGGLN (63 aa). Asn187 and Asn213 each carry an N-linked (GlcNAc...) asparagine glycan. The next 4 membrane-spanning stretches (helical) occupy residues 226–244, 253–270, 306–323, and 335–356; these read WKMTICLLAAWVVVCLAMI, IMYFSSLFPYVVLICFLI, VFFALGLGFGGVIAFSSY, and VLVSFINFFTSILATLVVFAVL. The Extracellular portion of the chain corresponds to 357–452; that stretch reads GFKANVINEK…FIAFTEAMTH (96 aa). Asn383 and Asn394 each carry an N-linked (GlcNAc...) asparagine glycan. 5 helical membrane passes run 453 to 472, 496 to 514, 530 to 550, 571 to 592, and 620 to 642; these read FPASPFWSVMFFLMLVNLGL, ILTVICCLLAFCIGLIFVQ, TLPLLIVVILENIAVSFVYGI, YMWKYISPLMLLSLLIASIVNM, and VICISLMVLAILPIPVVFIIRRC. At 643–729 the chain is on the cytoplasmic side; the sequence is NLIDDSSGNL…DMPDMPESDL (87 aa). Ser687, Ser699, and Ser701 each carry phosphoserine.

Belongs to the sodium:neurotransmitter symporter (SNF) (TC 2.A.22) family. SLC6A15 subfamily.

It is found in the membrane. The catalysed reaction is L-leucine(in) + Na(+)(in) = L-leucine(out) + Na(+)(out). It carries out the reaction L-isoleucine(in) + Na(+)(in) = L-isoleucine(out) + Na(+)(out). The enzyme catalyses L-methionine(in) + Na(+)(in) = L-methionine(out) + Na(+)(out). It catalyses the reaction L-proline(in) + Na(+)(in) = L-proline(out) + Na(+)(out). The catalysed reaction is L-alanine(in) + Na(+)(in) = L-alanine(out) + Na(+)(out). It carries out the reaction L-asparagine(in) + Na(+)(in) = L-asparagine(out) + Na(+)(out). The enzyme catalyses L-valine(in) + Na(+)(in) = L-valine(out) + Na(+)(out). It catalyses the reaction L-cysteine(in) + Na(+)(in) = L-cysteine(out) + Na(+)(out). The catalysed reaction is L-glutamine(in) + Na(+)(in) = L-glutamine(out) + Na(+)(out). It carries out the reaction L-serine(in) + Na(+)(in) = L-serine(out) + Na(+)(out). The enzyme catalyses L-threonine(in) + Na(+)(in) = L-threonine(out) + Na(+)(out). It catalyses the reaction L-pipecolate(in) + Na(+)(in) = L-pipecolate(out) + Na(+)(out). The catalysed reaction is L-phenylalanine(in) + Na(+)(in) = L-phenylalanine(out) + Na(+)(out). Functions as a sodium-dependent neutral amino acid transporter. Exhibits preference for the branched-chain amino acids, particularly leucine, valine and isoleucine and methionine. Can also transport low-affinity substrates such as alanine, phenylalanine, glutamine and pipecolic acid. Mediates the saturable, pH-sensitive and electrogenic cotransport of proline and sodium ions with a stoichiometry of 1:1. May have a role as transporter for neurotransmitter precursors into neurons. In contrast to other members of the neurotransmitter transporter family, does not appear to be chloride-dependent. In Bos taurus (Bovine), this protein is Sodium-dependent neutral amino acid transporter B(0)AT2 (SLC6A15).